A 548-amino-acid polypeptide reads, in one-letter code: Thermolysin (548 aa).

The signal sequence occupies residues 1–28 (MKMKMKLASFGLAAGLAAQVFLPYNALA). Residues 29–232 (STEHVTWNQQ…DAAKPGDVKS (204 aa)) constitute a propeptide, activation peptide. The Ca(2+) site is built by aspartate 289, aspartate 291, glutamine 293, and aspartate 370. Position 374 (histidine 374) interacts with Zn(2+). The active site involves glutamate 375. Zn(2+)-binding residues include histidine 378 and glutamate 398. Residues glutamate 409, asparagine 415, aspartate 417, glutamate 419, glutamate 422, tyrosine 425, threonine 426, isoleucine 429, and aspartate 432 each contribute to the Ca(2+) site. The active-site Proton donor is the histidine 463.

Belongs to the peptidase M4 family. Ca(2+) is required as a cofactor. Zn(2+) serves as cofactor.

Its subcellular location is the secreted. It catalyses the reaction Preferential cleavage: Xaa-|-Leu &gt; Xaa-|-Phe.. Its function is as follows. Extracellular zinc metalloprotease. This Bacillus thermoproteolyticus protein is Thermolysin (npr).